An 83-amino-acid polypeptide reads, in one-letter code: METVLGMTAIAVALLIGMGALGTAIGFGLLGGKFLEGAARQPEMAPMLQVKMFIVAGLLDAVTMIGVGIALFMLFTNPLGAML.

The next 2 membrane-spanning stretches (helical) occupy residues 10–30 (IAVA…FGLL) and 52–72 (MFIV…IALF).

It belongs to the ATPase C chain family. In terms of assembly, F-type ATPases have 2 components, F(1) - the catalytic core - and F(0) - the membrane proton channel. F(1) has five subunits: alpha(3), beta(3), gamma(1), delta(1), epsilon(1). F(0) has three main subunits: a(1), b(2) and c(10-14). The alpha and beta chains form an alternating ring which encloses part of the gamma chain. F(1) is attached to F(0) by a central stalk formed by the gamma and epsilon chains, while a peripheral stalk is formed by the delta and b chains.

Its subcellular location is the cell inner membrane. In terms of biological role, f(1)F(0) ATP synthase produces ATP from ADP in the presence of a proton or sodium gradient. F-type ATPases consist of two structural domains, F(1) containing the extramembraneous catalytic core and F(0) containing the membrane proton channel, linked together by a central stalk and a peripheral stalk. During catalysis, ATP synthesis in the catalytic domain of F(1) is coupled via a rotary mechanism of the central stalk subunits to proton translocation. Its function is as follows. Key component of the F(0) channel; it plays a direct role in translocation across the membrane. A homomeric c-ring of between 10-14 subunits forms the central stalk rotor element with the F(1) delta and epsilon subunits. In Shewanella loihica (strain ATCC BAA-1088 / PV-4), this protein is ATP synthase subunit c.